A 286-amino-acid chain; its full sequence is Bifunctional protein FolD (286 aa).

NADP(+) contacts are provided by residues 165–167 (GRS), serine 190, and valine 231.

This sequence belongs to the tetrahydrofolate dehydrogenase/cyclohydrolase family. In terms of assembly, homodimer.

It catalyses the reaction (6R)-5,10-methylene-5,6,7,8-tetrahydrofolate + NADP(+) = (6R)-5,10-methenyltetrahydrofolate + NADPH. It carries out the reaction (6R)-5,10-methenyltetrahydrofolate + H2O = (6R)-10-formyltetrahydrofolate + H(+). Its pathway is one-carbon metabolism; tetrahydrofolate interconversion. Its function is as follows. Catalyzes the oxidation of 5,10-methylenetetrahydrofolate to 5,10-methenyltetrahydrofolate and then the hydrolysis of 5,10-methenyltetrahydrofolate to 10-formyltetrahydrofolate. This Bacillus cytotoxicus (strain DSM 22905 / CIP 110041 / 391-98 / NVH 391-98) protein is Bifunctional protein FolD.